A 454-amino-acid chain; its full sequence is UPF0210 protein BLA_0552 (454 aa).

This sequence belongs to the UPF0210 family. In terms of assembly, homodimer.

The protein is UPF0210 protein BLA_0552 of Bifidobacterium animalis subsp. lactis (strain AD011).